Reading from the N-terminus, the 238-residue chain is Thiamine import ATP-binding protein ThiQ (238 aa).

Positions 2-230 constitute an ABC transporter domain; sequence LALDKVRYEY…HPHPELAQFV (229 aa). 32-39 provides a ligand contact to ATP; sequence GPSGAGKS.

It belongs to the ABC transporter superfamily. Thiamine importer (TC 3.A.1.19.1) family. The complex is composed of two ATP-binding proteins (ThiQ), two transmembrane proteins (ThiP) and a solute-binding protein (ThiB).

Its subcellular location is the cell inner membrane. It carries out the reaction thiamine(out) + ATP + H2O = thiamine(in) + ADP + phosphate + H(+). Part of the ABC transporter complex ThiBPQ involved in thiamine import. Responsible for energy coupling to the transport system. The chain is Thiamine import ATP-binding protein ThiQ from Vibrio cholerae serotype O1 (strain ATCC 39315 / El Tor Inaba N16961).